Consider the following 555-residue polypeptide: F-box protein COS111 (555 aa).

Disordered stretches follow at residues 31-82 (MSVS…SVSN) and 124-147 (DHSI…KQHH). The segment covering 32–42 (SVSSRSSQEES) has biased composition (low complexity). Polar residues predominate over residues 48–61 (ESVSSLSMQEQQTE). Over residues 129-142 (SGVTRSTVSTVRPT) the composition is skewed to low complexity. Residues 196 to 246 (HKDLNSLPHEIMSKIVSHLDQRDVTMCLYVNKNMYSTAVRQLYKEPFFSST) form the F-box domain. Residues 327–346 (SSSSLSCSRTSSNSNSSTES) are compositionally biased toward low complexity. The segment at 327–354 (SSSSLSCSRTSSNSNSSTESKPVKKRRS) is disordered.

In terms of biological role, F-box protein probably involved in ubiquitin conjugation pathway. The chain is F-box protein COS111 (COS111) from Yarrowia lipolytica (strain CLIB 122 / E 150) (Yeast).